A 521-amino-acid polypeptide reads, in one-letter code: (+)-kolavenyl diphosphate synthase (521 aa).

2 residues coordinate Mg(2+): Asp311 and Asp313. The DXDD motif signature appears at 311–314; it reads DGDD.

It belongs to the terpene synthase family. It depends on Mg(2+) as a cofactor.

It catalyses the reaction (2E,6E,10E)-geranylgeranyl diphosphate = (+)-kolavenyl diphosphate. Its function is as follows. Involved in the biosynthesis of (+)-O-methylkolavelool. Catalyzes the conversion of geranylgeranyl diphosphate into (+)-kolavenyl diphosphate. This Herpetosiphon aurantiacus (strain ATCC 23779 / DSM 785 / 114-95) protein is (+)-kolavenyl diphosphate synthase.